Reading from the N-terminus, the 264-residue chain is Astacin-like metalloprotease toxin 1 (264 aa).

A signal peptide spans 1–16 (MIKYIGVFAFLVGGFC). Positions 17–51 (HDFETVISNQDPIVDGMRLVEGDMLFDDGPLFTER) are excised as a propeptide. The 198-residue stretch at 52 to 249 (NAVKYDQQLW…VKVNKLYKCP (198 aa)) folds into the Peptidase M12A domain. 2 cysteine pairs are disulfide-bonded: Cys93/Cys248 and Cys114/Cys135. A Zn(2+)-binding site is contributed by His143. Glu144 is an active-site residue. His147 and His153 together coordinate Zn(2+). Residues Asn173 and Asn185 are each glycosylated (N-linked (GlcNAc...) asparagine).

In terms of assembly, monomer. Zn(2+) is required as a cofactor. In terms of tissue distribution, expressed by the venom gland.

It is found in the secreted. Inhibited by 1,10-phenanthroline. Functionally, zinc metalloprotease. Provoques deadhesion of endothelial cells from cell cultures, and also degradation of fibronectin, fibrinogen and gelatin in vitro. Its role in the venom is not fully understood but it might act as a spreading factor that facilitates diffusion of other venom toxins. Alternatively, it might be involved in the proteolytic processing of other venom toxins or it might play a role in extra-oral digestion of prey. This Loxosceles intermedia (Brown spider) protein is Astacin-like metalloprotease toxin 1.